The sequence spans 62 residues: MGIKPSYIKNLGEELIVKHRDRFSGDFEENKHAVAEVAVIDSKTVRNRVAGYISRKINTRKR.

The protein belongs to the eukaryotic ribosomal protein eS17 family.

The polypeptide is Small ribosomal subunit protein eS17 (Methanoculleus marisnigri (strain ATCC 35101 / DSM 1498 / JR1)).